We begin with the raw amino-acid sequence, 543 residues long: 2-succinyl-5-enolpyruvyl-6-hydroxy-3-cyclohexene-1-carboxylate synthase (543 aa).

Belongs to the TPP enzyme family. MenD subfamily. As to quaternary structure, homodimer. Mg(2+) serves as cofactor. Requires Mn(2+) as cofactor. The cofactor is thiamine diphosphate.

It catalyses the reaction isochorismate + 2-oxoglutarate + H(+) = 5-enolpyruvoyl-6-hydroxy-2-succinyl-cyclohex-3-ene-1-carboxylate + CO2. Its pathway is quinol/quinone metabolism; 1,4-dihydroxy-2-naphthoate biosynthesis; 1,4-dihydroxy-2-naphthoate from chorismate: step 2/7. The protein operates within quinol/quinone metabolism; menaquinone biosynthesis. Catalyzes the thiamine diphosphate-dependent decarboxylation of 2-oxoglutarate and the subsequent addition of the resulting succinic semialdehyde-thiamine pyrophosphate anion to isochorismate to yield 2-succinyl-5-enolpyruvyl-6-hydroxy-3-cyclohexene-1-carboxylate (SEPHCHC). This chain is 2-succinyl-5-enolpyruvyl-6-hydroxy-3-cyclohexene-1-carboxylate synthase, found in Corynebacterium glutamicum (strain R).